Reading from the N-terminus, the 89-residue chain is Large ribosomal subunit protein bL27 (89 aa).

Residues 1 to 23 form a disordered region; it reads MAHKKAGGSSRNGRDSHSKRLGV.

The protein belongs to the bacterial ribosomal protein bL27 family.

This is Large ribosomal subunit protein bL27 from Mesorhizobium japonicum (strain LMG 29417 / CECT 9101 / MAFF 303099) (Mesorhizobium loti (strain MAFF 303099)).